Here is a 428-residue protein sequence, read N- to C-terminus: CinA-like protein (428 aa).

Belongs to the CinA family.

The sequence is that of CinA-like protein from Gemmatimonas aurantiaca (strain DSM 14586 / JCM 11422 / NBRC 100505 / T-27).